The chain runs to 323 residues: L-lactate dehydrogenase (323 aa).

Residues V16, N37, and 81–82 (GA) each bind NAD(+). Substrate contacts are provided by residues Q84, R90, and 122 to 125 (NPVD). NAD(+) contacts are provided by residues 120–122 (ATN) and S145. 150-153 (DSAR) provides a ligand contact to substrate. H177 acts as the Proton acceptor in catalysis. Phosphotyrosine is present on Y221. Residue T230 participates in substrate binding.

It belongs to the LDH/MDH superfamily. LDH family. In terms of assembly, homotetramer.

Its subcellular location is the cytoplasm. It carries out the reaction (S)-lactate + NAD(+) = pyruvate + NADH + H(+). It participates in fermentation; pyruvate fermentation to lactate; (S)-lactate from pyruvate: step 1/1. Catalyzes the conversion of lactate to pyruvate. The chain is L-lactate dehydrogenase from Limosilactobacillus reuteri (Lactobacillus reuteri).